Reading from the N-terminus, the 185-residue chain is Threonylcarbamoyl-AMP synthase (185 aa).

The YrdC-like domain maps to 1 to 185 (MDNFEQVLNA…AKTSQILRQG (185 aa)). Positions 163–185 (ETSGRDKPSEIRDAKTSQILRQG) are disordered. Positions 164–177 (TSGRDKPSEIRDAK) are enriched in basic and acidic residues.

This sequence belongs to the SUA5 family. TsaC subfamily.

Its subcellular location is the cytoplasm. The catalysed reaction is L-threonine + hydrogencarbonate + ATP = L-threonylcarbamoyladenylate + diphosphate + H2O. Functionally, required for the formation of a threonylcarbamoyl group on adenosine at position 37 (t(6)A37) in tRNAs that read codons beginning with adenine. Catalyzes the conversion of L-threonine, HCO(3)(-)/CO(2) and ATP to give threonylcarbamoyl-AMP (TC-AMP) as the acyladenylate intermediate, with the release of diphosphate. This chain is Threonylcarbamoyl-AMP synthase, found in Vibrio parahaemolyticus serotype O3:K6 (strain RIMD 2210633).